We begin with the raw amino-acid sequence, 130 residues long: Aspartate 1-decarboxylase (130 aa).

S25 functions as the Schiff-base intermediate with substrate; via pyruvic acid in the catalytic mechanism. S25 is modified (pyruvic acid (Ser)). A substrate-binding site is contributed by T57. Y58 acts as the Proton donor in catalysis. Residue 73 to 75 (GAA) coordinates substrate.

The protein belongs to the PanD family. Heterooctamer of four alpha and four beta subunits. Pyruvate is required as a cofactor. In terms of processing, is synthesized initially as an inactive proenzyme, which is activated by self-cleavage at a specific serine bond to produce a beta-subunit with a hydroxyl group at its C-terminus and an alpha-subunit with a pyruvoyl group at its N-terminus.

The protein localises to the cytoplasm. The catalysed reaction is L-aspartate + H(+) = beta-alanine + CO2. Its pathway is cofactor biosynthesis; (R)-pantothenate biosynthesis; beta-alanine from L-aspartate: step 1/1. Its function is as follows. Catalyzes the pyruvoyl-dependent decarboxylation of aspartate to produce beta-alanine. This chain is Aspartate 1-decarboxylase, found in Myxococcus xanthus (strain DK1622).